Reading from the N-terminus, the 260-residue chain is Transmembrane protein 106C (260 aa).

G2 carries the N-myristoyl glycine lipid modification. The chain crosses the membrane as a helical span at residues 85 to 105; that stretch reads YVLLSVLLCLLASGLVFFFLF. N171 carries N-linked (GlcNAc...) asparagine glycosylation. Residues 196–216 form a helical membrane-spanning segment; it reads SYVYFYCTLPAILVHNIVIFM.

It belongs to the TMEM106 family. As to quaternary structure, interacts with TMEM106B.

It localises to the endoplasmic reticulum membrane. Its subcellular location is the membrane. The protein is Transmembrane protein 106C (Tmem106c) of Rattus norvegicus (Rat).